Here is a 347-residue protein sequence, read N- to C-terminus: Ribosomal RNA small subunit methyltransferase C (347 aa).

Belongs to the methyltransferase superfamily. RsmC family. Monomer.

The protein localises to the cytoplasm. The catalysed reaction is guanosine(1207) in 16S rRNA + S-adenosyl-L-methionine = N(2)-methylguanosine(1207) in 16S rRNA + S-adenosyl-L-homocysteine + H(+). In terms of biological role, specifically methylates the guanine in position 1207 of 16S rRNA in the 30S particle. The sequence is that of Ribosomal RNA small subunit methyltransferase C from Yersinia pseudotuberculosis serotype IB (strain PB1/+).